The chain runs to 390 residues: Phosphopentomutase (390 aa).

Mn(2+) contacts are provided by Asp14, Asp286, His291, Asp327, His328, and His339.

Belongs to the phosphopentomutase family. The cofactor is Mn(2+).

Its subcellular location is the cytoplasm. The enzyme catalyses 2-deoxy-alpha-D-ribose 1-phosphate = 2-deoxy-D-ribose 5-phosphate. The catalysed reaction is alpha-D-ribose 1-phosphate = D-ribose 5-phosphate. Its pathway is carbohydrate degradation; 2-deoxy-D-ribose 1-phosphate degradation; D-glyceraldehyde 3-phosphate and acetaldehyde from 2-deoxy-alpha-D-ribose 1-phosphate: step 1/2. Functionally, isomerase that catalyzes the conversion of deoxy-ribose 1-phosphate (dRib-1-P) and ribose 1-phosphate (Rib-1-P) to deoxy-ribose 5-phosphate (dRib-5-P) and ribose 5-phosphate (Rib-5-P), respectively. The chain is Phosphopentomutase from Exiguobacterium sibiricum (strain DSM 17290 / CCUG 55495 / CIP 109462 / JCM 13490 / 255-15).